A 1224-amino-acid polypeptide reads, in one-letter code: ATP-dependent helicase/deoxyribonuclease subunit B (1224 aa).

The 326-residue stretch at 1-326 folds into the UvrD-like helicase ATP-binding domain; that stretch reads MSLRFILGRA…VCAAANRRSE (326 aa). ATP is bound at residue 8–15; sequence GRAGTGKS. The UvrD-like helicase C-terminal domain occupies 283 to 584; that stretch reads QSAPRFQHPE…KLSLIPPELD (302 aa). The [4Fe-4S] cluster site is built by cysteine 841, cysteine 1176, cysteine 1179, and cysteine 1185.

The protein belongs to the helicase family. AddB/RexB type 1 subfamily. As to quaternary structure, heterodimer of AddA and AddB. It depends on Mg(2+) as a cofactor. Requires [4Fe-4S] cluster as cofactor.

The heterodimer acts as both an ATP-dependent DNA helicase and an ATP-dependent, dual-direction single-stranded exonuclease. Recognizes the chi site generating a DNA molecule suitable for the initiation of homologous recombination. The AddB subunit has 5' -&gt; 3' nuclease activity but not helicase activity. In Heliobacterium modesticaldum (strain ATCC 51547 / Ice1), this protein is ATP-dependent helicase/deoxyribonuclease subunit B.